The chain runs to 240 residues: MGNKVNPIGMRLQVNRTWDSRWYADTKDYGDLLLEDLKIREFIKEECKQAGISRVIIERPHKKCRVTIHTARPGVIIGKKGADIEGLRRKIAAMTDSELHLNIVEVRKPELDAALVGESIAQQLERRVSFRRAMKRAVQNAVRMGAQGIRVNLAGRLGGAEIARTEWYREGRVPLHTLRADIDFANVEATTAYGIIGIKVWIFKGEIMEHDPQARDRRHAELQEGGGPRPQGGGRPRRDR.

The 69-residue stretch at 39–107 (IREFIKEECK…ELHLNIVEVR (69 aa)) folds into the KH type-2 domain. Residues 212-222 (PQARDRRHAEL) are compositionally biased toward basic and acidic residues. The segment at 212-240 (PQARDRRHAELQEGGGPRPQGGGRPRRDR) is disordered. The span at 224 to 234 (EGGGPRPQGGG) shows a compositional bias: gly residues.

The protein belongs to the universal ribosomal protein uS3 family. As to quaternary structure, part of the 30S ribosomal subunit. Forms a tight complex with proteins S10 and S14.

In terms of biological role, binds the lower part of the 30S subunit head. Binds mRNA in the 70S ribosome, positioning it for translation. The polypeptide is Small ribosomal subunit protein uS3 (Dinoroseobacter shibae (strain DSM 16493 / NCIMB 14021 / DFL 12)).